Here is a 483-residue protein sequence, read N- to C-terminus: H/ACA ribonucleoprotein complex subunit CBF5 (483 aa).

Lys-9 is covalently cross-linked (Glycyl lysine isopeptide (Lys-Gly) (interchain with G-Cter in ubiquitin)). Position 47 is a phosphoserine (Ser-47). Catalysis depends on Asp-95, which acts as the Nucleophile. Residues 266–341 form the PUA domain; that stretch reads YKRIVVKDSA…VVASVKRCIM (76 aa). A Glycyl lysine isopeptide (Lys-Gly) (interchain with G-Cter in ubiquitin) cross-link involves residue Lys-267. The disordered stretch occupies residues 357–483; the sequence is QKKKQMKADG…EEKKSKKSKK (127 aa). Positions 362-373 are enriched in basic and acidic residues; that stretch reads MKADGKLDKYGR. Thr-378 carries the phosphothreonine modification. Over residues 408 to 436 the composition is skewed to basic and acidic residues; the sequence is EPKKAKEDSLIKEVETEKEEVKEDDSKKE. 10 tandem repeats follow at residues 434-436, 437-439, 440-442, 443-445, 446-448, 449-451, 452-454, 455-457, 458-460, and 461-463. A 10 X 3 AA tandem repeats of K-K-[DE] region spans residues 434–463; sequence KKEKKEKKDKKEKKEKKEKKDKKEKKEKKE. Residues 437–465 show a composition bias toward basic residues; that stretch reads KKEKKDKKEKKEKKEKKDKKEKKEKKEKK. Over residues 466–477 the composition is skewed to basic and acidic residues; sequence RKSEDGDSEEKK.

It belongs to the pseudouridine synthase TruB family. As to quaternary structure, component of the small nucleolar ribonucleoprotein particles containing H/ACA-type snoRNAs (H/ACA snoRNPs). The protein component of the H/ACA snoRNP contains CBF5, GAR1, NHP2 and NOP10. The complex contains a stable core composed of CBF5 and NOP10, to which GAR1 and NHP2 subsequently bind. Also interacts with NAF1 and SHQ1, which may be required for assembly of H/ACA snoRNP complexes. May also associate with the CBF3 110 kDa subunit (CBF2). Interacts with the trimethylguanosine synthase (TGS1) and with NOP53.

It localises to the nucleus. It is found in the nucleolus. The protein localises to the chromosome. Its subcellular location is the centromere. The protein resides in the cytoplasm. It localises to the cytoskeleton. It catalyses the reaction uridine in 5S rRNA = pseudouridine in 5S rRNA. It carries out the reaction uridine in snRNA = pseudouridine in snRNA. The enzyme catalyses a uridine in mRNA = a pseudouridine in mRNA. In terms of biological role, catalytic subunit of H/ACA small nucleolar ribonucleoprotein (H/ACA snoRNP) complex, which catalyzes pseudouridylation of rRNA. This involves the isomerization of uridine such that the ribose is subsequently attached to C5, instead of the normal N1. Pseudouridine ('psi') residues may serve to stabilize the conformation of rRNAs and play a central role in ribosomal RNA processing. The H/ACA snoRNP complex also mediates pseudouridylation of other types of RNAs. Catalyzes pseudouridylation at position 93 in U2 snRNA. Also catalyzes pseudouridylation of mRNAs; H/ACA-type snoRNAs probably guide pseudouridylation of mRNAs. It is a centromeric DNA-CBF3-binding factor which is involved in mitotic chromosome segregation. Essential for cell growth. This is H/ACA ribonucleoprotein complex subunit CBF5 (CBF5) from Saccharomyces cerevisiae (strain ATCC 204508 / S288c) (Baker's yeast).